The primary structure comprises 309 residues: Homoserine O-succinyltransferase (309 aa).

Cys-142 acts as the Acyl-thioester intermediate in catalysis. Positions 163 and 192 each coordinate substrate. His-235 (proton acceptor) is an active-site residue. Glu-237 is a catalytic residue. Arg-249 is a substrate binding site.

Belongs to the MetA family.

The protein localises to the cytoplasm. The catalysed reaction is L-homoserine + succinyl-CoA = O-succinyl-L-homoserine + CoA. The protein operates within amino-acid biosynthesis; L-methionine biosynthesis via de novo pathway; O-succinyl-L-homoserine from L-homoserine: step 1/1. In terms of biological role, transfers a succinyl group from succinyl-CoA to L-homoserine, forming succinyl-L-homoserine. In Cronobacter sakazakii (strain ATCC BAA-894) (Enterobacter sakazakii), this protein is Homoserine O-succinyltransferase.